The sequence spans 175 residues: Vesicle-associated membrane protein-associated protein SCS22 (175 aa).

The 125-residue stretch at 1-125 folds into the MSP domain; sequence MRIVPEKLVF…DDIVFKKIKI (125 aa). Residues 1–154 are Cytoplasmic-facing; sequence MRIVPEKLVF…RAPSAGNGQS (154 aa). Residues 133-152 are disordered; the sequence is RKPSGNHDAESARAPSAGNG. A helical; Anchor for type IV membrane protein transmembrane segment spans residues 155-175; that stretch reads LSSRALLIITVIALLVGWIYY.

It belongs to the VAMP-associated protein (VAP) (TC 9.B.17) family.

The protein resides in the membrane. Its function is as follows. Targets proteins containing a FFAT motif to membranes. Involved in regulation of phospholipid metabolism. This chain is Vesicle-associated membrane protein-associated protein SCS22 (SCS22), found in Saccharomyces cerevisiae (strain ATCC 204508 / S288c) (Baker's yeast).